A 114-amino-acid polypeptide reads, in one-letter code: Holo-[acyl-carrier-protein] synthase (114 aa).

Mg(2+)-binding residues include Asp8 and Glu58.

Belongs to the P-Pant transferase superfamily. AcpS family. Mg(2+) is required as a cofactor.

The protein localises to the cytoplasm. The enzyme catalyses apo-[ACP] + CoA = holo-[ACP] + adenosine 3',5'-bisphosphate + H(+). Functionally, transfers the 4'-phosphopantetheine moiety from coenzyme A to a Ser of acyl-carrier-protein. This chain is Holo-[acyl-carrier-protein] synthase, found in Mycoplasma genitalium (strain ATCC 33530 / DSM 19775 / NCTC 10195 / G37) (Mycoplasmoides genitalium).